Reading from the N-terminus, the 428-residue chain is Histidinol dehydrogenase (428 aa).

NAD(+)-binding residues include Tyr-126, Gln-188, and Asn-211. Residues Ser-234, Gln-256, and His-259 each coordinate substrate. The Zn(2+) site is built by Gln-256 and His-259. Residues Glu-324 and His-325 each act as proton acceptor in the active site. Residues His-325, Asp-358, Glu-412, and His-417 each coordinate substrate. Asp-358 contributes to the Zn(2+) binding site. His-417 provides a ligand contact to Zn(2+).

This sequence belongs to the histidinol dehydrogenase family. It depends on Zn(2+) as a cofactor.

The catalysed reaction is L-histidinol + 2 NAD(+) + H2O = L-histidine + 2 NADH + 3 H(+). The protein operates within amino-acid biosynthesis; L-histidine biosynthesis; L-histidine from 5-phospho-alpha-D-ribose 1-diphosphate: step 9/9. Its function is as follows. Catalyzes the sequential NAD-dependent oxidations of L-histidinol to L-histidinaldehyde and then to L-histidine. The chain is Histidinol dehydrogenase from Chlorobium chlorochromatii (strain CaD3).